The following is a 750-amino-acid chain: Photosystem I P700 chlorophyll a apoprotein A1 (750 aa).

The next 8 membrane-spanning stretches (helical) occupy residues 70–93, 156–179, 195–219, 291–309, 346–369, 385–411, 433–455, and 531–549; these read VFSA…FHGA, LYCT…FHYH, LNHH…HVSL, IAHH…GHMY, WHAQ…HHMY, LSLF…IFMV, AIIS…LYIH, and FLVH…LILL. [4Fe-4S] cluster is bound by residues cysteine 573 and cysteine 582. Transmembrane regions (helical) follow at residues 589–610 and 664–686; these read HVFL…HFSW and LSAY…MFLF. Chlorophyll a' is bound at residue histidine 675. Residues methionine 683 and tyrosine 691 each coordinate chlorophyll a. Tryptophan 692 contributes to the phylloquinone binding site. A helical membrane pass occupies residues 724–744; that stretch reads AVGVTHYLLGGIATTWAFFLA.

The protein belongs to the PsaA/PsaB family. The PsaA/B heterodimer binds the P700 chlorophyll special pair and subsequent electron acceptors. PSI consists of a core antenna complex that captures photons, and an electron transfer chain that converts photonic excitation into a charge separation. The eukaryotic PSI reaction center is composed of at least 11 subunits. P700 is a chlorophyll a/chlorophyll a' dimer, A0 is one or more chlorophyll a, A1 is one or both phylloquinones and FX is a shared 4Fe-4S iron-sulfur center. is required as a cofactor.

The protein localises to the plastid. The protein resides in the chloroplast thylakoid membrane. The catalysed reaction is reduced [plastocyanin] + hnu + oxidized [2Fe-2S]-[ferredoxin] = oxidized [plastocyanin] + reduced [2Fe-2S]-[ferredoxin]. In terms of biological role, psaA and PsaB bind P700, the primary electron donor of photosystem I (PSI), as well as the electron acceptors A0, A1 and FX. PSI is a plastocyanin-ferredoxin oxidoreductase, converting photonic excitation into a charge separation, which transfers an electron from the donor P700 chlorophyll pair to the spectroscopically characterized acceptors A0, A1, FX, FA and FB in turn. Oxidized P700 is reduced on the lumenal side of the thylakoid membrane by plastocyanin. This Panax ginseng (Korean ginseng) protein is Photosystem I P700 chlorophyll a apoprotein A1.